The primary structure comprises 889 residues: Oxysterol-binding protein-related protein 8 (889 aa).

Methionine 1 bears the N-acetylmethionine mark. The segment at 1–129 (MEGGLADGEP…SLKVQKKNYR (129 aa)) is disordered. Position 14 is a phosphoserine (serine 14). Composition is skewed to polar residues over residues 28–46 (VVANSDESQLLTPGKMSQR) and 62–71 (PSLSPASPHS). Residues serine 65 and serine 68 each carry the phosphoserine modification. Composition is skewed to basic and acidic residues over residues 73-88 (GFERGKEDISQNKDES), 95-109 (SKSESKLYNGSEKDS), and 116-129 (TKKESLKVQKKNYR). The PH domain maps to 148–265 (VIVMADWLKI…WMDALELALK (118 aa)). Residues serine 314, serine 328, and serine 342 each carry the phosphoserine modification. The segment covering 322 to 336 (KDQDMYSDKSDKEND) has biased composition (basic and acidic residues). Residues 322–399 (KDQDMYSDKS…AGEASQTETV (78 aa)) form a disordered region. The span at 346–363 (VMGKSEESDTDTSERQDD) shows a compositional bias: basic and acidic residues. A 1,2-diacyl-sn-glycero-3-phospho-(1D-myo-inositol 4-phosphate)-binding positions include 420 to 425 (LSKVVL), 482 to 485 (KPYN), and 514 to 515 (HH). Residues 420 to 425 (LSKVVL) and asparagine 485 contribute to the a 1,2-diacyl-sn-glycero-3-phospho-L-serine site. Residue serine 540 participates in a 1,2-diacyl-sn-glycero-3-phospho-L-serine binding. A 1,2-diacyl-sn-glycero-3-phospho-(1D-myo-inositol 4-phosphate) is bound by residues lysine 706, glutamate 710, and arginine 714. The segment at 771–823 (KHRTPMVSVPKMKHKPTRQQKKVAKGYSSPEPDIQDSSGSEAQSVKPSTRRKK) is disordered. Residues 781-794 (KMKHKPTRQQKKVA) show a composition bias toward basic residues. Over residues 805-817 (QDSSGSEAQSVKP) the composition is skewed to polar residues. Phosphoserine is present on residues serine 807, serine 808, serine 810, and serine 814. A helical transmembrane segment spans residues 871-888 (YFIIFLLILLQVIINFMF).

Belongs to the OSBP family. As to quaternary structure, interacts with SPAG5. Interacts with NUP62. As to expression, widely expressed. Expressed at higher level in macrophages.

It is found in the endoplasmic reticulum membrane. The protein localises to the nucleus membrane. Lipid transporter involved in lipid countertransport between the endoplasmic reticulum and the plasma membrane: specifically exchanges phosphatidylserine with phosphatidylinositol 4-phosphate (PI4P), delivering phosphatidylserine to the plasma membrane in exchange for PI4P, which is degraded by the SAC1/SACM1L phosphatase in the endoplasmic reticulum. Binds phosphatidylserine and PI4P in a mutually exclusive manner. Binds oxysterol, 25-hydroxycholesterol and cholesterol. The polypeptide is Oxysterol-binding protein-related protein 8 (OSBPL8) (Homo sapiens (Human)).